Here is a 238-residue protein sequence, read N- to C-terminus: Small ribosomal subunit protein uS2 (238 aa).

The protein belongs to the universal ribosomal protein uS2 family.

The protein is Small ribosomal subunit protein uS2 of Chloroflexus aggregans (strain MD-66 / DSM 9485).